Reading from the N-terminus, the 473-residue chain is Photosystem II CP43 reaction center protein (473 aa).

The propeptide occupies 1–14 (MKTLYSLRRFYHVE). Thr-15 bears the N-acetylthreonine mark. Thr-15 is modified (phosphothreonine). Helical transmembrane passes span 69 to 93 (LFEV…PHLA), 134 to 155 (LLGP…KDRN), 178 to 200 (KALY…RKIT), 255 to 275 (KPFA…LSYS), and 291 to 312 (CFNN…ASQA). Glu-367 serves as a coordination point for [CaMn4O5] cluster. A helical transmembrane segment spans residues 447–471 (RARAAAAGFEKGIDRDFEPVLSMTP).

This sequence belongs to the PsbB/PsbC family. PsbC subfamily. In terms of assembly, PSII is composed of 1 copy each of membrane proteins PsbA, PsbB, PsbC, PsbD, PsbE, PsbF, PsbH, PsbI, PsbJ, PsbK, PsbL, PsbM, PsbT, PsbX, PsbY, PsbZ, Psb30/Ycf12, at least 3 peripheral proteins of the oxygen-evolving complex and a large number of cofactors. It forms dimeric complexes. Binds multiple chlorophylls and provides some of the ligands for the Ca-4Mn-5O cluster of the oxygen-evolving complex. It may also provide a ligand for a Cl- that is required for oxygen evolution. PSII binds additional chlorophylls, carotenoids and specific lipids. is required as a cofactor.

It localises to the plastid. The protein localises to the chloroplast thylakoid membrane. One of the components of the core complex of photosystem II (PSII). It binds chlorophyll and helps catalyze the primary light-induced photochemical processes of PSII. PSII is a light-driven water:plastoquinone oxidoreductase, using light energy to abstract electrons from H(2)O, generating O(2) and a proton gradient subsequently used for ATP formation. This chain is Photosystem II CP43 reaction center protein, found in Jasminum nudiflorum (Winter jasmine).